A 538-amino-acid polypeptide reads, in one-letter code: Bifunctional purine biosynthesis protein PurH (538 aa).

An MGS-like domain is found at 6-158 (KHIPAPDLHR…KNHAYVATVV (153 aa)).

Belongs to the PurH family.

The enzyme catalyses (6R)-10-formyltetrahydrofolate + 5-amino-1-(5-phospho-beta-D-ribosyl)imidazole-4-carboxamide = 5-formamido-1-(5-phospho-D-ribosyl)imidazole-4-carboxamide + (6S)-5,6,7,8-tetrahydrofolate. It catalyses the reaction IMP + H2O = 5-formamido-1-(5-phospho-D-ribosyl)imidazole-4-carboxamide. It functions in the pathway purine metabolism; IMP biosynthesis via de novo pathway; 5-formamido-1-(5-phospho-D-ribosyl)imidazole-4-carboxamide from 5-amino-1-(5-phospho-D-ribosyl)imidazole-4-carboxamide (10-formyl THF route): step 1/1. The protein operates within purine metabolism; IMP biosynthesis via de novo pathway; IMP from 5-formamido-1-(5-phospho-D-ribosyl)imidazole-4-carboxamide: step 1/1. The protein is Bifunctional purine biosynthesis protein PurH of Brucella ovis (strain ATCC 25840 / 63/290 / NCTC 10512).